A 745-amino-acid polypeptide reads, in one-letter code: DNA ligase (745 aa).

Residues 1–27 (MRNHGPGSERKDACVSAPDPTFSDDVP) are disordered. NAD(+)-binding positions include 57-61 (DAEYD), 106-107 (SL), and Glu135. Lys137 serves as the catalytic N6-AMP-lysine intermediate. Positions 158 and 197 each coordinate NAD(+). Positions 216–235 (GKPPFANPRNAAAGSLRQKD) are disordered. NAD(+) contacts are provided by Lys313 and Lys337. Cys431, Cys434, Cys450, and Cys456 together coordinate Zn(2+). Positions 649–738 (DGPRLLDGIT…PEAARAARLS (90 aa)) constitute a BRCT domain.

The protein belongs to the NAD-dependent DNA ligase family. LigA subfamily. Mg(2+) is required as a cofactor. Mn(2+) serves as cofactor.

The enzyme catalyses NAD(+) + (deoxyribonucleotide)n-3'-hydroxyl + 5'-phospho-(deoxyribonucleotide)m = (deoxyribonucleotide)n+m + AMP + beta-nicotinamide D-nucleotide.. DNA ligase that catalyzes the formation of phosphodiester linkages between 5'-phosphoryl and 3'-hydroxyl groups in double-stranded DNA using NAD as a coenzyme and as the energy source for the reaction. It is essential for DNA replication and repair of damaged DNA. The chain is DNA ligase from Thermobifida fusca (strain YX).